The sequence spans 231 residues: Sec-independent protein translocase protein TatB (231 aa).

A helical membrane pass occupies residues Met1–Gly21. The segment at Met77 to Ala168 is disordered. Residues Ala101–Pro111 show a composition bias toward basic and acidic residues. A compositionally biased stretch (polar residues) spans Ser148 to Asn157.

It belongs to the TatB family. In terms of assembly, the Tat system comprises two distinct complexes: a TatABC complex, containing multiple copies of TatA, TatB and TatC subunits, and a separate TatA complex, containing only TatA subunits. Substrates initially bind to the TatABC complex, which probably triggers association of the separate TatA complex to form the active translocon.

The protein resides in the cell inner membrane. Part of the twin-arginine translocation (Tat) system that transports large folded proteins containing a characteristic twin-arginine motif in their signal peptide across membranes. Together with TatC, TatB is part of a receptor directly interacting with Tat signal peptides. TatB may form an oligomeric binding site that transiently accommodates folded Tat precursor proteins before their translocation. In Psychrobacter cryohalolentis (strain ATCC BAA-1226 / DSM 17306 / VKM B-2378 / K5), this protein is Sec-independent protein translocase protein TatB.